The primary structure comprises 439 residues: Xaa-Pro dipeptidase (439 aa).

Residues aspartate 244, aspartate 255, histidine 335, glutamate 380, and glutamate 419 each contribute to the Mn(2+) site.

Belongs to the peptidase M24B family. Bacterial-type prolidase subfamily. Mn(2+) serves as cofactor.

It carries out the reaction Xaa-L-Pro dipeptide + H2O = an L-alpha-amino acid + L-proline. Splits dipeptides with a prolyl residue in the C-terminal position. The chain is Xaa-Pro dipeptidase from Shewanella woodyi (strain ATCC 51908 / MS32).